The following is a 482-amino-acid chain: PHD finger protein At3g20280 (482 aa).

Residues 45 to 97 (AMACQICEVTINEMDTLLICDACEKAYHLKCLQGNNMKGVPKSEWHCSRCVQA) form a PHD-type zinc finger. Disordered regions lie at residues 188 to 210 (TNIG…APVS) and 314 to 482 (SSNS…ENAA). Residues 314 to 324 (SSNSQQAVSHS) are compositionally biased toward low complexity. 2 stretches are compositionally biased toward polar residues: residues 377 to 386 (ACQNHPTASP) and 393 to 428 (QDST…NYDS). The span at 447-482 (DSEKGKGLNGLDDRHQEQPSEPEFYKSDSVKEENAA) shows a compositional bias: basic and acidic residues.

This is PHD finger protein At3g20280 from Arabidopsis thaliana (Mouse-ear cress).